The chain runs to 257 residues: Imidazole glycerol phosphate synthase subunit HisF (257 aa).

Active-site residues include Asp11 and Asp130.

The protein belongs to the HisA/HisF family. As to quaternary structure, heterodimer of HisH and HisF.

It localises to the cytoplasm. It catalyses the reaction 5-[(5-phospho-1-deoxy-D-ribulos-1-ylimino)methylamino]-1-(5-phospho-beta-D-ribosyl)imidazole-4-carboxamide + L-glutamine = D-erythro-1-(imidazol-4-yl)glycerol 3-phosphate + 5-amino-1-(5-phospho-beta-D-ribosyl)imidazole-4-carboxamide + L-glutamate + H(+). It participates in amino-acid biosynthesis; L-histidine biosynthesis; L-histidine from 5-phospho-alpha-D-ribose 1-diphosphate: step 5/9. In terms of biological role, IGPS catalyzes the conversion of PRFAR and glutamine to IGP, AICAR and glutamate. The HisF subunit catalyzes the cyclization activity that produces IGP and AICAR from PRFAR using the ammonia provided by the HisH subunit. In Tolumonas auensis (strain DSM 9187 / NBRC 110442 / TA 4), this protein is Imidazole glycerol phosphate synthase subunit HisF.